Here is a 136-residue protein sequence, read N- to C-terminus: Small ribosomal subunit protein uS19 (136 aa).

This sequence belongs to the universal ribosomal protein uS19 family.

In terms of biological role, protein S19 forms a complex with S13 that binds strongly to the 16S ribosomal RNA. This chain is Small ribosomal subunit protein uS19 (rps19), found in Methanothermobacter thermautotrophicus (strain ATCC 29096 / DSM 1053 / JCM 10044 / NBRC 100330 / Delta H) (Methanobacterium thermoautotrophicum).